Reading from the N-terminus, the 558-residue chain is 2-isopropylmalate synthase (558 aa).

A Pyruvate carboxyltransferase domain is found at 30-303 (PIWCSVDLRD…DPELDCRDIE (274 aa)). Mg(2+) is bound by residues Asp39, His242, His244, and Asn278. Positions 437 to 558 (QPNARIKFVD…ANRVLEERAK (122 aa)) are regulatory domain.

The protein belongs to the alpha-IPM synthase/homocitrate synthase family. LeuA type 2 subfamily. In terms of assembly, homodimer. Mg(2+) is required as a cofactor.

Its subcellular location is the cytoplasm. It catalyses the reaction 3-methyl-2-oxobutanoate + acetyl-CoA + H2O = (2S)-2-isopropylmalate + CoA + H(+). Its pathway is amino-acid biosynthesis; L-leucine biosynthesis; L-leucine from 3-methyl-2-oxobutanoate: step 1/4. Functionally, catalyzes the condensation of the acetyl group of acetyl-CoA with 3-methyl-2-oxobutanoate (2-ketoisovalerate) to form 3-carboxy-3-hydroxy-4-methylpentanoate (2-isopropylmalate). The chain is 2-isopropylmalate synthase from Agrobacterium fabrum (strain C58 / ATCC 33970) (Agrobacterium tumefaciens (strain C58)).